A 453-amino-acid chain; its full sequence is uncharacterized protein (453 aa).

The protein to B.subtilis YcdB.

This is an uncharacterized protein from Bacillus subtilis (strain 168).